We begin with the raw amino-acid sequence, 166 residues long: MNAVRRKKLMWVMFTLAGAVIAVALVIYAIGKQTDYYFDATAIAQGEAPQDKRIRAGGMVVAGSVQRAPNDPLSVEFAITDFQSTVPVTYQGILPDLFAENSGVVATGKMQGDIFVAGEVLAKHDENYMPPEVAKSMKENNRSGAVPSSEQYNPAEKLHETKTLQQ.

Over 1 to 8 (MNAVRRKK) the chain is Cytoplasmic. Residues 9 to 29 (LMWVMFTLAGAVIAVALVIYA) form a helical; Signal-anchor for type II membrane protein membrane-spanning segment. Over 30 to 166 (IGKQTDYYFD…KLHETKTLQQ (137 aa)) the chain is Periplasmic. The heme site is built by His-124 and Tyr-128. Positions 133-166 (VAKSMKENNRSGAVPSSEQYNPAEKLHETKTLQQ) are disordered. Residues 142–152 (RSGAVPSSEQY) are compositionally biased toward polar residues. The segment covering 156-166 (EKLHETKTLQQ) has biased composition (basic and acidic residues).

It belongs to the CcmE/CycJ family.

The protein resides in the cell inner membrane. Its function is as follows. Heme chaperone required for the biogenesis of c-type cytochromes. Transiently binds heme delivered by CcmC and transfers the heme to apo-cytochromes in a process facilitated by CcmF and CcmH. This Psychrobacter arcticus (strain DSM 17307 / VKM B-2377 / 273-4) protein is Cytochrome c-type biogenesis protein CcmE.